The chain runs to 87 residues: Small ribosomal subunit protein bS16 (87 aa).

The protein belongs to the bacterial ribosomal protein bS16 family.

In Ehrlichia ruminantium (strain Gardel), this protein is Small ribosomal subunit protein bS16.